The chain runs to 462 residues: Asparagine--tRNA ligase (462 aa).

Belongs to the class-II aminoacyl-tRNA synthetase family. As to quaternary structure, homodimer.

The protein resides in the cytoplasm. It carries out the reaction tRNA(Asn) + L-asparagine + ATP = L-asparaginyl-tRNA(Asn) + AMP + diphosphate + H(+). In Borreliella afzelii (strain PKo) (Borrelia afzelii), this protein is Asparagine--tRNA ligase.